The chain runs to 135 residues: Small ribosomal subunit protein uS12 (135 aa).

The interval 1 to 23 (MPTINQLVRKGRHSKTTKSDSPA) is disordered. 3-methylthioaspartic acid is present on Asp102.

The protein belongs to the universal ribosomal protein uS12 family. As to quaternary structure, part of the 30S ribosomal subunit. Contacts proteins S8 and S17. May interact with IF1 in the 30S initiation complex.

In terms of biological role, with S4 and S5 plays an important role in translational accuracy. Its function is as follows. Interacts with and stabilizes bases of the 16S rRNA that are involved in tRNA selection in the A site and with the mRNA backbone. Located at the interface of the 30S and 50S subunits, it traverses the body of the 30S subunit contacting proteins on the other side and probably holding the rRNA structure together. The combined cluster of proteins S8, S12 and S17 appears to hold together the shoulder and platform of the 30S subunit. In Lactobacillus gasseri (strain ATCC 33323 / DSM 20243 / BCRC 14619 / CIP 102991 / JCM 1131 / KCTC 3163 / NCIMB 11718 / NCTC 13722 / AM63), this protein is Small ribosomal subunit protein uS12.